Reading from the N-terminus, the 359-residue chain is MSTILFYTRALIIGATKSQGVFGKTGTLVANISSNRGIISIVPRTNPPQKLLKMQEEENSLLEEARKVVPALSFGKHKGQAGRVGVIGGSEEYTGAPYFAAISAMKAGADLAHVFCSKSASTVIKSYSPELIVHPLLDVPNAVTLLDEWLPRIHSHVIGPGLGRVDATLNTVKEILIKLKKQEIPIVIDADGLFLITRDPSIIHGYTKAILTPNVVEFQRLSKSMNLNWESKDLNGSIMETVALSKALGGVTIVRKGEVDIVAAGDEVVTMDEIGSPRRCGGQGDLLSGVMALFSYWTHNSTCTPPPTLLAGYAACFLTKRCANQAFQKHGRSTATTDLISEINSVFVNNFENPTDPKS.

The 290-residue stretch at 61–350 (LLEEARKVVP…SEINSVFVNN (290 aa)) folds into the YjeF C-terminal domain. Residues G161 and 214–220 (NVVEFQR) each bind (6S)-NADPHX. ATP is bound by residues 256–260 (KGEVD) and 275–284 (GSPRRCGGQG). Residue D285 coordinates (6S)-NADPHX.

Belongs to the NnrD/CARKD family. Mg(2+) is required as a cofactor.

The catalysed reaction is (6S)-NADHX + ATP = ADP + phosphate + NADH + H(+). It carries out the reaction (6S)-NADPHX + ATP = ADP + phosphate + NADPH + H(+). In terms of biological role, catalyzes the dehydration of the S-form of NAD(P)HX at the expense of ATP, which is converted to ADP. Together with NAD(P)HX epimerase, which catalyzes the epimerization of the S- and R-forms, the enzyme allows the repair of both epimers of NAD(P)HX, a damaged form of NAD(P)H that is a result of enzymatic or heat-dependent hydration. The protein is ATP-dependent (S)-NAD(P)H-hydrate dehydratase of Ciona intestinalis (Transparent sea squirt).